A 661-amino-acid polypeptide reads, in one-letter code: Zeaxanthin epoxidase, chloroplastic (661 aa).

The transit peptide at 1–50 (MASTLFYNSMNLSAAVFSRTHFPIPINKDFPLEFSPCIHTDYHLRSRTRS) directs the protein to the chloroplast. FAD-binding positions include 82 to 110 (RILV…VVFE) and 360 to 373 (ILTW…LLGD). An FHA domain is found at 558 to 607 (CIIGSAPHGDVSGISIAIPKPQVSEMHARISYKDGAFYLTDLRSEHGTWI).

It depends on FAD as a cofactor.

The protein localises to the plastid. Its subcellular location is the chloroplast. It catalyses the reaction all-trans-zeaxanthin + 4 reduced [2Fe-2S]-[ferredoxin] + 2 O2 + 4 H(+) = all-trans-violaxanthin + 4 oxidized [2Fe-2S]-[ferredoxin] + 2 H2O. It participates in plant hormone biosynthesis; abscisate biosynthesis. Functionally, converts zeaxanthin into antheraxanthin and subsequently violaxanthin. Involved in the epoxidation of zeaxanthin. This chain is Zeaxanthin epoxidase, chloroplastic, found in Prunus armeniaca (Apricot).